A 947-amino-acid chain; its full sequence is Bifunctional glutamine synthetase adenylyltransferase/adenylyl-removing enzyme (947 aa).

The interval 1–440 is adenylyl removase; sequence MTPLSSPLSQ…VFNELIGDDE (440 aa). Positions 450-947 are adenylyl transferase; the sequence is SEPWREVWQD…ASWRKWLVAV (498 aa).

This sequence belongs to the GlnE family. The cofactor is Mg(2+).

It carries out the reaction [glutamine synthetase]-O(4)-(5'-adenylyl)-L-tyrosine + phosphate = [glutamine synthetase]-L-tyrosine + ADP. The enzyme catalyses [glutamine synthetase]-L-tyrosine + ATP = [glutamine synthetase]-O(4)-(5'-adenylyl)-L-tyrosine + diphosphate. Its function is as follows. Involved in the regulation of glutamine synthetase GlnA, a key enzyme in the process to assimilate ammonia. When cellular nitrogen levels are high, the C-terminal adenylyl transferase (AT) inactivates GlnA by covalent transfer of an adenylyl group from ATP to specific tyrosine residue of GlnA, thus reducing its activity. Conversely, when nitrogen levels are low, the N-terminal adenylyl removase (AR) activates GlnA by removing the adenylyl group by phosphorolysis, increasing its activity. The regulatory region of GlnE binds the signal transduction protein PII (GlnB) which indicates the nitrogen status of the cell. The chain is Bifunctional glutamine synthetase adenylyltransferase/adenylyl-removing enzyme from Salmonella newport (strain SL254).